Here is a 452-residue protein sequence, read N- to C-terminus: Retinoid-inducible serine carboxypeptidase (452 aa).

The signal sequence occupies residues 1-28; that stretch reads MELSRRICLVRLWLLLLSFLLGFSAGSA. 3 N-linked (GlcNAc...) asparagine glycosylation sites follow: N64, N102, and N126. S167 is a catalytic residue. N-linked (GlcNAc...) asparagine glycans are attached at residues N192 and N362. Residues D371 and H431 contribute to the active site.

The protein belongs to the peptidase S10 family.

Its subcellular location is the secreted. In terms of biological role, may be involved in vascular wall and kidney homeostasis. The polypeptide is Retinoid-inducible serine carboxypeptidase (Scpep1) (Mus musculus (Mouse)).